Here is a 368-residue protein sequence, read N- to C-terminus: Cobalt-precorrin-5B C(1)-methyltransferase (368 aa).

This sequence belongs to the CbiD family.

It catalyses the reaction Co-precorrin-5B + S-adenosyl-L-methionine = Co-precorrin-6A + S-adenosyl-L-homocysteine. The protein operates within cofactor biosynthesis; adenosylcobalamin biosynthesis; cob(II)yrinate a,c-diamide from sirohydrochlorin (anaerobic route): step 6/10. In terms of biological role, catalyzes the methylation of C-1 in cobalt-precorrin-5B to form cobalt-precorrin-6A. The protein is Cobalt-precorrin-5B C(1)-methyltransferase of Brucella anthropi (strain ATCC 49188 / DSM 6882 / CCUG 24695 / JCM 21032 / LMG 3331 / NBRC 15819 / NCTC 12168 / Alc 37) (Ochrobactrum anthropi).